A 268-amino-acid polypeptide reads, in one-letter code: 4-hydroxy-tetrahydrodipicolinate reductase (268 aa).

NAD(+) is bound by residues 10–15 (GAGGRM), D36, 99–101 (GTT), and 123–126 (APNM). H156 (proton donor/acceptor) is an active-site residue. H157 is a (S)-2,3,4,5-tetrahydrodipicolinate binding site. The active-site Proton donor is K160. 166 to 167 (GT) is a (S)-2,3,4,5-tetrahydrodipicolinate binding site.

Belongs to the DapB family.

It localises to the cytoplasm. The enzyme catalyses (S)-2,3,4,5-tetrahydrodipicolinate + NAD(+) + H2O = (2S,4S)-4-hydroxy-2,3,4,5-tetrahydrodipicolinate + NADH + H(+). The catalysed reaction is (S)-2,3,4,5-tetrahydrodipicolinate + NADP(+) + H2O = (2S,4S)-4-hydroxy-2,3,4,5-tetrahydrodipicolinate + NADPH + H(+). Its pathway is amino-acid biosynthesis; L-lysine biosynthesis via DAP pathway; (S)-tetrahydrodipicolinate from L-aspartate: step 4/4. Its function is as follows. Catalyzes the conversion of 4-hydroxy-tetrahydrodipicolinate (HTPA) to tetrahydrodipicolinate. This chain is 4-hydroxy-tetrahydrodipicolinate reductase, found in Dechloromonas aromatica (strain RCB).